The following is a 388-amino-acid chain: Queuine tRNA-ribosyltransferase (388 aa).

The active-site Proton acceptor is Asp-90. Substrate contacts are provided by residues 90-94, Asp-144, Gln-205, and Gly-232; that span reads DSGGF. The segment at 263-269 is RNA binding; sequence GVGTPED. Residue Asp-282 is the Nucleophile of the active site. The tract at residues 287–291 is RNA binding; important for wobble base 34 recognition; the sequence is TRNAR. Zn(2+) contacts are provided by Cys-320, Cys-322, Cys-325, and His-351.

The protein belongs to the queuine tRNA-ribosyltransferase family. As to quaternary structure, homodimer. Within each dimer, one monomer is responsible for RNA recognition and catalysis, while the other monomer binds to the replacement base PreQ1. Zn(2+) serves as cofactor.

It carries out the reaction 7-aminomethyl-7-carbaguanine + guanosine(34) in tRNA = 7-aminomethyl-7-carbaguanosine(34) in tRNA + guanine. It participates in tRNA modification; tRNA-queuosine biosynthesis. Functionally, catalyzes the base-exchange of a guanine (G) residue with the queuine precursor 7-aminomethyl-7-deazaguanine (PreQ1) at position 34 (anticodon wobble position) in tRNAs with GU(N) anticodons (tRNA-Asp, -Asn, -His and -Tyr). Catalysis occurs through a double-displacement mechanism. The nucleophile active site attacks the C1' of nucleotide 34 to detach the guanine base from the RNA, forming a covalent enzyme-RNA intermediate. The proton acceptor active site deprotonates the incoming PreQ1, allowing a nucleophilic attack on the C1' of the ribose to form the product. After dissociation, two additional enzymatic reactions on the tRNA convert PreQ1 to queuine (Q), resulting in the hypermodified nucleoside queuosine (7-(((4,5-cis-dihydroxy-2-cyclopenten-1-yl)amino)methyl)-7-deazaguanosine). The chain is Queuine tRNA-ribosyltransferase from Campylobacter curvus (strain 525.92).